Reading from the N-terminus, the 505-residue chain is Ion-translocating oxidoreductase complex subunit C (505 aa).

4Fe-4S ferredoxin-type domains lie at E381–Y410 and K420–Y449. Residues C390, C393, C396, C400, C429, C432, C435, and C439 each contribute to the [4Fe-4S] cluster site.

Belongs to the 4Fe4S bacterial-type ferredoxin family. RnfC subfamily. In terms of assembly, the complex is composed of six subunits: RnfA, RnfB, RnfC, RnfD, RnfE and RnfG. [4Fe-4S] cluster serves as cofactor.

It localises to the cell inner membrane. Part of a membrane-bound complex that couples electron transfer with translocation of ions across the membrane. The chain is Ion-translocating oxidoreductase complex subunit C from Buchnera aphidicola subsp. Baizongia pistaciae (strain Bp).